The sequence spans 278 residues: Energy-coupling factor transporter ATP-binding protein EcfA (278 aa).

Positions 5 to 240 (LETKNLVYNY…KEVIDEADLR (236 aa)) constitute an ABC transporter domain. 38–45 (GHNGAGKS) provides a ligand contact to ATP.

This sequence belongs to the ABC transporter superfamily. Energy-coupling factor EcfA family. Forms a stable energy-coupling factor (ECF) transporter complex composed of 2 membrane-embedded substrate-binding proteins (S component), 2 ATP-binding proteins (A component) and 2 transmembrane proteins (T component).

The protein localises to the cell membrane. Its function is as follows. ATP-binding (A) component of a common energy-coupling factor (ECF) ABC-transporter complex. Unlike classic ABC transporters this ECF transporter provides the energy necessary to transport a number of different substrates. The polypeptide is Energy-coupling factor transporter ATP-binding protein EcfA (Methanosphaera stadtmanae (strain ATCC 43021 / DSM 3091 / JCM 11832 / MCB-3)).